We begin with the raw amino-acid sequence, 4043 residues long: Hybrid PKS-NRPS synthetase thnA (4043 aa).

Residues 6 to 440 (LEPIAIVGSA…GSNAHAILEE (435 aa)) form the Ketosynthase family 3 (KS3) domain. Residues C179, H319, and H360 each act as for beta-ketoacyl synthase activity in the active site. The tract at residues 558–894 (VFTGQGAQWA…FSDALGFVWT (337 aa)) is malonyl-CoA:ACP transacylase (MAT) domain. Residues 952–1090 (HEILGTILPE…ATVKIILGTP (139 aa)) form an N-terminal hotdog fold region. The tract at residues 952–1256 (HEILGTILPE…LSIKTFAPAT (305 aa)) is dehydratase (DH) domain. A PKS/mFAS DH domain is found at 952–1258 (HEILGTILPE…IKTFAPATQA (307 aa)). H984 functions as the Proton acceptor; for dehydratase activity in the catalytic mechanism. Residues 1105-1258 (LFPIDADRFY…IKTFAPATQA (154 aa)) are C-terminal hotdog fold. The active-site Proton donor; for dehydratase activity is the D1166. The interval 1417-1591 (LASMMKQITH…RKAGFAGVDA (175 aa)) is methyltransferase (MT) domain. The ketoreductase (KR) domain stretch occupies residues 2146–2320 (TYLLVGLTGK…GSTFDIGQVA (175 aa)). The Carrier 1 domain occupies 2434–2512 (EQALDILKEC…ELCDRVVDKL (79 aa)). O-(pantetheine 4'-phosphoryl)serine is present on S2472. The disordered stretch occupies residues 2521 to 2618 (GKQGESQPPA…PPPPEPAVER (98 aa)). Low complexity predominate over residues 2527–2536 (QPPASTAQPQ). Residues 2537–2547 (PVAPKPKPLPV) show a composition bias toward pro residues. Polar residues predominate over residues 2578-2605 (YSATEASTRSGSPSEATRLSQKVSSKLQ). The tract at residues 2626–3067 (IKSVPISLGQ…IPRFSEKQLA (442 aa)) is condensation (C) domain. Residues 3092–3496 (QVARENPDKV…GTMVFHSRMA (405 aa)) form an adenylation (A) domain region. A Carrier 2 domain is found at 3614 to 3695 (TELTETMIQL…EMAQKVEETI (82 aa)). Residue S3655 is modified to O-(pantetheine 4'-phosphoryl)serine. The reductase (R) domain stretch occupies residues 3736 to 3954 (ITGATGFLSK…DMLPAVLTAQ (219 aa)).

In the C-terminal section; belongs to the NRP synthetase family.

It catalyses the reaction malate + 6 malonyl-CoA + acetyl-CoA + 2 AH2 + 2 S-adenosyl-L-methionine + 5 NADPH + 9 H(+) = trihazone A + 2 A + 2 S-adenosyl-L-homocysteine + 6 CO2 + 5 NADP(+) + 7 CoA + 6 H2O. Its pathway is secondary metabolite biosynthesis. Hybrid PKS-NRPS synthetase; part of the gene cluster that produces the tetronate natural products trihazones. The PKS-NRPS synthetase thnA with the help of the trans-enoyl reductase thnE are responsible for the synthesis of the carboxylmethyl containing trihazone A. The PKS portion of thnA synthesizes beta-keto-triene chain from one acetyl-CoA and 6 equivalents of malonyl-CoA, in collaboration with thnE, which selectively reduces the enoyl intermediate during the first and fourth iteration of the PKS. The NRPS domain selects and activates malate, of which the alpha-hydroxyl group attacks the completed polyketide acyl-S-ACP chain to form the ester product. Intramolecular Dieckmann cyclization catalyzed by the terminal reductase domain releases the product as trihazone A from the PKS-NPRS. The pathway begins with the formation of trihazone A by the hybrid PKS-NRPS synthetase thnA and the trans-enoyl reductase thnE. Trihazone A is further decarboxylated by the 2-oxoglutarate-dependent dioxygenase thnC to produce trihazone D. The function of the FAD-dependent monooxygenase thnD has still to be identified. In Trichoderma harzianum (Hypocrea lixii), this protein is Hybrid PKS-NRPS synthetase thnA.